Here is a 562-residue protein sequence, read N- to C-terminus: Zinc finger protein 579 (562 aa).

Pro residues predominate over residues 1–11 (MDPQPPPPAQG). The interval 1–45 (MDPQPPPPAQGSPPHRDRGRGRGRGRGRGRGRGRGRGGAGAPRAP) is disordered. Basic residues predominate over residues 17-35 (DRGRGRGRGRGRGRGRGRG). 3 consecutive C2H2-type zinc fingers follow at residues 46–68 (LPCPTCGRLFRFPYYLSRHRLSH), 74–96 (HACPLCPKAFRRPAHLSRHLRGH), and 102–125 (LRCAACPRTFPEPAQLRRHLAQEH). The residue at position 94 (Arg-94) is an Omega-N-methylarginine. Disordered regions lie at residues 120–154 (HLAQEHAGSEVDLSTQRAVKEEPEASWGPQDEGVE) and 166–199 (EEATTQWPAGDSAPAAVPTSTDPRESEAKEAEAG). Residues 187–197 (DPRESEAKEAE) are compositionally biased toward basic and acidic residues. Ser-191 carries the phosphoserine modification. C2H2-type zinc fingers lie at residues 267–289 (HQCSICLKAFARPWSLSRHRLVH) and 295–317 (FVCPDCGLAFRLASYLRQHRRVH). The tract at residues 321 to 377 (SLLAPLPGAGKKDDKASGGRNSGKGPEGGEGAECGGASEGGEGGHNGGDATPARPPA) is disordered. The segment covering 340–367 (RNSGKGPEGGEGAECGGASEGGEGGHNG) has biased composition (gly residues). C2H2-type zinc fingers lie at residues 382 to 404 (FWCPECGKGFRRRAHLRQHGVTH), 410 to 432 (FQCVRCQREFKRLADLARHAQVH), and 439 to 461 (HPCPRCPRRFSRAYSLLRHQRCH). At Ser-486 the chain carries Phosphoserine. The interval 505-530 (AHIKEEPPSPGTPPQSPPAPPVFLSA) is disordered. Residues 512 to 525 (PSPGTPPQSPPAPP) show a composition bias toward pro residues.

The protein belongs to the krueppel C2H2-type zinc-finger protein family.

The protein localises to the nucleus. May be involved in transcriptional regulation. In Mus musculus (Mouse), this protein is Zinc finger protein 579 (Znf579).